A 260-amino-acid polypeptide reads, in one-letter code: Ribosome maturation factor RimP (260 aa).

Residues 198–260 (QSLGILPPPP…RGDIDPIEGE (63 aa)) are disordered. Composition is skewed to basic and acidic residues over residues 210–228 (AKTD…ENGK) and 238–254 (NTKE…RGDI).

Belongs to the RimP family.

The protein localises to the cytoplasm. Functionally, required for maturation of 30S ribosomal subunits. The polypeptide is Ribosome maturation factor RimP (Nitrobacter winogradskyi (strain ATCC 25391 / DSM 10237 / CIP 104748 / NCIMB 11846 / Nb-255)).